We begin with the raw amino-acid sequence, 406 residues long: MTFSVDKVRADFPVLSREVNGLPLAYLDSAASAQKPSQVIDSEAEFYRHGYAAVHRGIHTLSAQATEKMENVRKRASLFINARSAEELVFVRGTTEGINLVANSWGNSNVRAGDNIIISQMEHHANIVPWQMLCARVGAELRVIPLNPDGTLQLETLPTLFDEKTRLLAITHVSNVLGTENPLAEMITLAHQHGAKVLVDGAQAVMHHPVHVQALDCDFYVFSGHKLYGPTGIGILYVKEALLQEMPPWEGGGSMIATVSLSEGTTWTKAPWRFEAGTPNTGGIIGLGAALEYVSALGLNSIAEYEQNLMHYALSQLESVPDLTLYGPQNRLGVIAFNLGKHHAYDVGSFLDNYGIAVRTGHHCAMPLMAYYNVPAMCRASLAMYNTHEEVDRLVTGLQRIHRLLG.

Lys-226 carries the post-translational modification N6-(pyridoxal phosphate)lysine. The Cysteine persulfide intermediate role is filled by Cys-364.

The protein belongs to the class-V pyridoxal-phosphate-dependent aminotransferase family. Csd subfamily. As to quaternary structure, homodimer. Interacts with SufE and the SufBCD complex composed of SufB, SufC and SufD. The interaction with SufE is required to mediate the direct transfer of the sulfur atom from the S-sulfanylcysteine. It depends on pyridoxal 5'-phosphate as a cofactor.

Its subcellular location is the cytoplasm. It carries out the reaction (sulfur carrier)-H + L-cysteine = (sulfur carrier)-SH + L-alanine. It catalyses the reaction L-selenocysteine + AH2 = hydrogenselenide + L-alanine + A + H(+). The protein operates within cofactor biosynthesis; iron-sulfur cluster biosynthesis. Its function is as follows. Cysteine desulfurases mobilize the sulfur from L-cysteine to yield L-alanine, an essential step in sulfur metabolism for biosynthesis of a variety of sulfur-containing biomolecules. Component of the suf operon, which is activated and required under specific conditions such as oxidative stress and iron limitation. Acts as a potent selenocysteine lyase in vitro, that mobilizes selenium from L-selenocysteine. Selenocysteine lyase activity is however unsure in vivo. This is Cysteine desulfurase from Escherichia coli O139:H28 (strain E24377A / ETEC).